We begin with the raw amino-acid sequence, 309 residues long: Elongation factor Ts, mitochondrial (309 aa).

It belongs to the EF-Ts family.

The protein localises to the mitochondrion. Its function is as follows. Associates with the EF-Tu.GDP complex and induces the exchange of GDP to GTP. It remains bound to the aminoacyl-tRNA.EF-Tu.GTP complex up to the GTP hydrolysis stage on the ribosome. The protein is Elongation factor Ts, mitochondrial (tsfm) of Salmo salar (Atlantic salmon).